Reading from the N-terminus, the 218-residue chain is Small ribosomal subunit protein uS3 (218 aa).

The KH type-2 domain occupies 38-106 (VREYINKRLQ…RVHINIVEIK (69 aa)).

This sequence belongs to the universal ribosomal protein uS3 family. Part of the 30S ribosomal subunit. Forms a tight complex with proteins S10 and S14.

In terms of biological role, binds the lower part of the 30S subunit head. Binds mRNA in the 70S ribosome, positioning it for translation. This is Small ribosomal subunit protein uS3 from Geobacillus thermodenitrificans (strain NG80-2).